The following is a 279-amino-acid chain: Presqualene diphosphate synthase (279 aa).

Belongs to the phytoene/squalene synthase family. HpnD subfamily.

The enzyme catalyses 2 (2E,6E)-farnesyl diphosphate = presqualene diphosphate + diphosphate. The protein operates within secondary metabolite biosynthesis; hopanoid biosynthesis. Functionally, involved in the biosynthesis of the hopanoid precursor squalene (SQ) from farnesyl diphosphate (FPP). Catalyzes the first step, the formation of presqualene diphosphate (PSPP) from two molecules of FPP. The sequence is that of Presqualene diphosphate synthase from Rhodopseudomonas palustris (strain ATCC BAA-98 / CGA009).